A 105-amino-acid chain; its full sequence is Small ribosomal subunit protein uS10 (105 aa).

Belongs to the universal ribosomal protein uS10 family. In terms of assembly, part of the 30S ribosomal subunit.

Involved in the binding of tRNA to the ribosomes. In Synechococcus elongatus (strain ATCC 33912 / PCC 7942 / FACHB-805) (Anacystis nidulans R2), this protein is Small ribosomal subunit protein uS10.